The sequence spans 241 residues: Beta-nerve growth factor (241 aa).

An N-terminal signal peptide occupies residues 1-18; the sequence is MSMLFYTLITALLIGVQA. A propeptide spanning residues 19 to 121 is cleaved from the precursor; it reads EPYTDSNLPE…SFNRTHRSKR (103 aa). 3 N-linked (GlcNAc...) asparagine glycosylation sites follow: Asn-69, Asn-114, and Asn-166. Intrachain disulfides connect Cys-136/Cys-201, Cys-179/Cys-229, and Cys-189/Cys-231.

It belongs to the NGF-beta family. As to quaternary structure, homodimer. The homodimer interacts with a single NTRK1 chain. The homodimer interacts with a single NGFR chain. The NGF dimer interacts with a single SORCS2 chain (via extracellular domain). The NGF precursor (proNGF) binds to a receptor complex formed by SORT1 and NGFR, which leads to NGF endocytosis. Both mature NGF and the immature NGF precursor (proNGF) interact with SORCS2 and with the heterodimer formed by SORCS2 and NGFR (via extracellular domains). The NGF precursor (proNGF) has much higher affinity for SORCS2 than mature NGF. The NGF precursor (proNGF) has much higher affinity for SORT1 than mature NGF. Interacts with ADAM10 in a divalent cation-dependent manner. Interacts with SORCS3.

The protein localises to the secreted. Its subcellular location is the endosome lumen. Its function is as follows. Nerve growth factor is important for the development and maintenance of the sympathetic and sensory nervous systems. Extracellular ligand for the NTRK1 and NGFR receptors, activates cellular signaling cascades through those receptor tyrosine kinase to regulate neuronal proliferation, differentiation and survival. Inhibits metalloproteinase dependent proteolysis of platelet glycoprotein VI. This is Beta-nerve growth factor (NGF) from Mastomys natalensis (African soft-furred rat).